We begin with the raw amino-acid sequence, 202 residues long: MNPDYHYLFKLLLIGDSGVGKSCLLLRFADDTYSESFISTIGVDFKIRTIELNGKTIKLQIWDTAGQERFRTITSSYYRGAHGIIVVYDVTDKLTFENVRQWLQEIDRFACENVNKLLVGNKSDLVAKKVVDFNTAKAFADSLQIPFLETSAKQSTNVEQAFMTMATEIKNRLTASQPTQTVDKNKVVPGSSAPISPKSGCC.

GTP-binding positions include 15–23 (GDSGVGKSC), 33–40 (YSESFIST), 63–67 (DTAGQ), 121–124 (NKSD), and 151–153 (SAK). An Effector region motif is present at residues 37 to 45 (FISTIGVDF). Positions 180–202 (QTVDKNKVVPGSSAPISPKSGCC) are disordered. S-geranylgeranyl cysteine attachment occurs at residues Cys-201 and Cys-202.

Belongs to the small GTPase superfamily. Rab family.

It localises to the cell membrane. This is Ras-related protein Rab-1A (rab1A) from Dictyostelium discoideum (Social amoeba).